Consider the following 730-residue polypeptide: ATP-dependent DNA helicase Hel308 (730 aa).

ATP-binding positions include Gln-28 and Ile-46–Thr-53. The Helicase ATP-binding domain occupies Glu-33–Glu-199. The short motif at Asp-144 to His-147 is the DEAH box element. The 202-residue stretch at Ala-232–Ile-433 folds into the Helicase C-terminal domain.

It belongs to the helicase family. Hel308 subfamily. In terms of assembly, monomer.

The enzyme catalyses Couples ATP hydrolysis with the unwinding of duplex DNA by translocating in the 3'-5' direction.. It catalyses the reaction ATP + H2O = ADP + phosphate + H(+). Its function is as follows. DNA-dependent ATPase and 3'-5' DNA helicase that may be involved in repair of stalled replication forks. In Methanosarcina mazei (strain ATCC BAA-159 / DSM 3647 / Goe1 / Go1 / JCM 11833 / OCM 88) (Methanosarcina frisia), this protein is ATP-dependent DNA helicase Hel308.